The following is a 380-amino-acid chain: MQQSPTAGKIINCKAAVAWQPAAPLSIENVQVFPPRVHEVRIKIVNSGVCHTDAYTLSGKDPEGLFPVILGHEGAGIVESVGPQVTTVQVGDPVIALYTPECKTCKFCKSGKTNLCGRIRTTQGKGLMPDGTSRFSCNGNTLLHFMGCSTFSEYTVVADISVVAIERLAPLDSVCLLGCGITTGYGAATITADIKEGDSVAVFGLGSVGLAVIQGAVKKRAGRIFGIDVNPEKKNWAMSFGATDFINPNDLQSPIQDVLIHETDGGLDWTFDCTGNVHVMRSALEACHKGWGQSIVIGVAAAGQEISTRPFQLVTGRVWRGCAFGGVKGRSQLPDLVKEYLDHKLEIDKYITHRRPLKEINEAFTDMHNGNCIKTVLSIP.

Cys50 contacts Zn(2+). His51 is an NAD(+) binding site. Zn(2+)-binding residues include His72, Glu73, Cys102, Cys105, Cys108, Cys116, and Cys179. Residues Gly204–Gly209, Asp228, and Ile297–Val299 contribute to the NAD(+) site.

Belongs to the zinc-containing alcohol dehydrogenase family. Class-III subfamily. Zn(2+) is required as a cofactor.

The enzyme catalyses a primary alcohol + NAD(+) = an aldehyde + NADH + H(+). It catalyses the reaction a secondary alcohol + NAD(+) = a ketone + NADH + H(+). The catalysed reaction is S-(hydroxymethyl)glutathione + NADP(+) = S-formylglutathione + NADPH + H(+). It carries out the reaction S-(hydroxymethyl)glutathione + NAD(+) = S-formylglutathione + NADH + H(+). The enzyme catalyses S-nitrosoglutathione + NADH + H(+) = S-(hydroxysulfenamide)glutathione + NAD(+). Oxidizes long-chain alcohols and, in the presence of glutathione, is able to oxidize formaldehyde. Also acts as a S-nitroso-glutathione reductase by catalyzing the NADH-dependent reduction of S-nitrosoglutathione, thereby regulating protein S-nitrosylation. In Schizosaccharomyces pombe (strain 972 / ATCC 24843) (Fission yeast), this protein is Putative S-(hydroxymethyl)glutathione dehydrogenase 2.